The chain runs to 255 residues: Uracil-DNA glycosylase (255 aa).

A disordered region spans residues 1-20 (MFSASTTPEQPLGLSGDATP). Catalysis depends on Asp99, which acts as the Proton acceptor.

It belongs to the uracil-DNA glycosylase (UDG) superfamily. UNG family.

Its subcellular location is the host nucleus. The catalysed reaction is Hydrolyzes single-stranded DNA or mismatched double-stranded DNA and polynucleotides, releasing free uracil.. Functionally, excises uracil residues from the DNA which can arise as a result of misincorporation of dUMP residues by DNA polymerase or deamination of cytosines. Therefore may reduce deleterious uracil incorporation into the viral genome, particularly in terminally differentiated cells which lack DNA repair enzymes. The protein is Uracil-DNA glycosylase of Human herpesvirus 2 (strain HG52) (HHV-2).